The following is a 328-amino-acid chain: Probable D,D-dipeptide transport ATP-binding protein DdpD (328 aa).

The ABC transporter domain maps to 6 to 257; the sequence is LDIQQLHLSF…PRHPYTIGLL (252 aa). 42 to 49 provides a ligand contact to ATP; sequence GESGSGKS.

It belongs to the ABC transporter superfamily. In terms of assembly, the complex is composed of two ATP-binding proteins (DdpD and DdpF), two transmembrane proteins (DdpB and DdpC) and a solute-binding protein (DdpA).

The protein localises to the cell inner membrane. Its function is as follows. Part of the ABC transporter complex DdpABCDF, which is probably involved in D,D-dipeptide transport. Probably responsible for energy coupling to the transport system. The protein is Probable D,D-dipeptide transport ATP-binding protein DdpD of Escherichia coli (strain K12).